We begin with the raw amino-acid sequence, 212 residues long: Photosynthetic NDH subunit of subcomplex B 5, chloroplastic (212 aa).

A chloroplast-targeting transit peptide spans 1–48 (MATVTILSPKSIPKVTDSKFGARVSDQIVNVVKCGKSGRRLKLAKLVS). The next 2 membrane-spanning stretches (helical) occupy residues 115-135 (FQGL…YFDA) and 136-156 (PGEY…IIEM).

As to quaternary structure, part of the chloroplast NDH complex, composed of a mixture of chloroplast and nucleus encoded subunits. Component of the NDH subcomplex B, at least composed of PnsB1, PnsB2, PnsB3, PnsB4 and PnsB5.

The protein resides in the plastid. It is found in the chloroplast membrane. NDH shuttles electrons from NAD(P)H:plastoquinone, via FMN and iron-sulfur (Fe-S) centers, to quinones in the photosynthetic chain and possibly in a chloroplast respiratory chain. The immediate electron acceptor for the enzyme in this species is believed to be plastoquinone. Couples the redox reaction to proton translocation, and thus conserves the redox energy in a proton gradient. This chain is Photosynthetic NDH subunit of subcomplex B 5, chloroplastic, found in Arabidopsis thaliana (Mouse-ear cress).